The chain runs to 125 residues: MPTISQLIGSERKRLTRKTKSPALKSCPERRGVCTRVYTSTPKKPNSALRKVARVRLTSGFEVTAYIPGIGHNLQEHSVVLLRGGRVKDLPGVRYHIIRGTLDTAGVKDRRQSRSKYGAKAPKND.

The segment at 1 to 28 (MPTISQLIGSERKRLTRKTKSPALKSCP) is disordered. D89 bears the 3-methylthioaspartic acid mark. Positions 104–125 (TAGVKDRRQSRSKYGAKAPKND) are disordered.

Belongs to the universal ribosomal protein uS12 family. As to quaternary structure, part of the 30S ribosomal subunit. Contacts proteins S8 and S17. May interact with IF1 in the 30S initiation complex.

With S4 and S5 plays an important role in translational accuracy. Functionally, interacts with and stabilizes bases of the 16S rRNA that are involved in tRNA selection in the A site and with the mRNA backbone. Located at the interface of the 30S and 50S subunits, it traverses the body of the 30S subunit contacting proteins on the other side and probably holding the rRNA structure together. The combined cluster of proteins S8, S12 and S17 appears to hold together the shoulder and platform of the 30S subunit. This Prochlorococcus marinus subsp. pastoris (strain CCMP1986 / NIES-2087 / MED4) protein is Small ribosomal subunit protein uS12.